The following is a 549-amino-acid chain: Beta-mannosyltransferase 3 (549 aa).

The Cytoplasmic segment spans residues 1-37 (MFESDLSFYSALLILCCPISIVFFKKFPIKGYTGANK). The chain crosses the membrane as a helical span at residues 38 to 58 (VSLFLQCLIAILNLNILYSFI). At 59 to 549 (NSLTITLGHD…DTMGWDKLSR (491 aa)) the chain is on the extracellular side.

The protein belongs to the BMT family.

It localises to the membrane. In terms of biological role, beta-mannosyltransferase involved in cell wall biosynthesis. Required for addition of the second beta-mannose residue to acid-stable fraction of cell wall phosphopeptidomannan, and in elongation of beta-mannose chains on the phosphopeptidomannan acid-labile fraction. The protein is Beta-mannosyltransferase 3 (BMT3) of Candida albicans (strain SC5314 / ATCC MYA-2876) (Yeast).